Here is a 351-residue protein sequence, read N- to C-terminus: Glucose 1-dehydrogenase 1 (351 aa).

C39 contacts Zn(2+). T41 lines the substrate pocket. The Zn(2+) site is built by H64 and E65. Substrate is bound by residues E113 and E149. E149 is a binding site for Zn(2+). NADP(+) contacts are provided by residues 182–185 (AGPI), 265–267 (LGI), and 292–294 (ATN). N294 lines the substrate pocket.

Belongs to the zinc-containing alcohol dehydrogenase family. Glucose 1-dehydrogenase subfamily. Zn(2+) serves as cofactor.

It carries out the reaction D-glucose + NAD(+) = D-glucono-1,5-lactone + NADH + H(+). It catalyses the reaction D-glucose + NADP(+) = D-glucono-1,5-lactone + NADPH + H(+). Its function is as follows. Catalyzes the NAD(P)(+)-dependent oxidation of D-glucose to D-gluconate via gluconolactone. Can utilize both NAD(+) and NADP(+) as electron acceptor. Is involved in the degradation of glucose through a non-phosphorylative variant of the Entner-Doudoroff pathway. This Vulcanisaeta moutnovskia (strain 768-28) protein is Glucose 1-dehydrogenase 1.